Reading from the N-terminus, the 371-residue chain is Queuine tRNA-ribosyltransferase (371 aa).

D89 functions as the Proton acceptor in the catalytic mechanism. Residues 89 to 93, D143, Q185, and G212 each bind substrate; that span reads DSGGF. Positions 243 to 249 are RNA binding; it reads GVGKPED. D262 serves as the catalytic Nucleophile. The tract at residues 267-271 is RNA binding; important for wobble base 34 recognition; the sequence is TRNAR. Zn(2+)-binding residues include C300, C302, C305, and H331.

The protein belongs to the queuine tRNA-ribosyltransferase family. Homodimer. Within each dimer, one monomer is responsible for RNA recognition and catalysis, while the other monomer binds to the replacement base PreQ1. Zn(2+) serves as cofactor.

The catalysed reaction is 7-aminomethyl-7-carbaguanine + guanosine(34) in tRNA = 7-aminomethyl-7-carbaguanosine(34) in tRNA + guanine. Its pathway is tRNA modification; tRNA-queuosine biosynthesis. In terms of biological role, catalyzes the base-exchange of a guanine (G) residue with the queuine precursor 7-aminomethyl-7-deazaguanine (PreQ1) at position 34 (anticodon wobble position) in tRNAs with GU(N) anticodons (tRNA-Asp, -Asn, -His and -Tyr). Catalysis occurs through a double-displacement mechanism. The nucleophile active site attacks the C1' of nucleotide 34 to detach the guanine base from the RNA, forming a covalent enzyme-RNA intermediate. The proton acceptor active site deprotonates the incoming PreQ1, allowing a nucleophilic attack on the C1' of the ribose to form the product. After dissociation, two additional enzymatic reactions on the tRNA convert PreQ1 to queuine (Q), resulting in the hypermodified nucleoside queuosine (7-(((4,5-cis-dihydroxy-2-cyclopenten-1-yl)amino)methyl)-7-deazaguanosine). In Azotobacter vinelandii (strain DJ / ATCC BAA-1303), this protein is Queuine tRNA-ribosyltransferase.